Here is a 307-residue protein sequence, read N- to C-terminus: Transcription initiation factor IIB (307 aa).

Tandem repeats lie at residues 123 to 206 (NELE…LREL) and 217 to 298 (DYVT…ELTQ).

This sequence belongs to the TFIIB family.

Stabilizes TBP binding to an archaeal box-A promoter. Also responsible for recruiting RNA polymerase II to the pre-initiation complex (DNA-TBP-TFIIB). In Sulfolobus acidocaldarius (strain ATCC 33909 / DSM 639 / JCM 8929 / NBRC 15157 / NCIMB 11770), this protein is Transcription initiation factor IIB.